A 178-amino-acid chain; its full sequence is Cytochrome b6-f complex iron-sulfur subunit (178 aa).

Residues 20-42 (LLTFGTATGVALGALYPVANYFM) form a helical membrane-spanning segment. A Rieske domain is found at 71 to 161 (NHPAGDRSLV…IDVEDDKVFV (91 aa)). The [2Fe-2S] cluster site is built by Cys-107, His-109, Cys-125, and His-128. Cysteines 112 and 127 form a disulfide.

It belongs to the Rieske iron-sulfur protein family. The 4 large subunits of the cytochrome b6-f complex are cytochrome b6, subunit IV (17 kDa polypeptide, PetD), cytochrome f and the Rieske protein, while the 4 small subunits are PetG, PetL, PetM and PetN. The complex functions as a dimer. [2Fe-2S] cluster is required as a cofactor.

Its subcellular location is the cellular thylakoid membrane. The enzyme catalyses 2 oxidized [plastocyanin] + a plastoquinol + 2 H(+)(in) = 2 reduced [plastocyanin] + a plastoquinone + 4 H(+)(out). Functionally, component of the cytochrome b6-f complex, which mediates electron transfer between photosystem II (PSII) and photosystem I (PSI), cyclic electron flow around PSI, and state transitions. The polypeptide is Cytochrome b6-f complex iron-sulfur subunit (Prochlorococcus marinus (strain MIT 9211)).